Here is a 299-residue protein sequence, read N- to C-terminus: MSESTRLRIAIQKSGRLSKESQKLLKSCGVKFNVNEQRLIAHSDNMPIDLLRVRDDDIPGLVMDGVVDLGIIGENVLEEEQIERQSLGKPAECVKLRELDFGACRLSLAVPNEFEYQDASSLEGLRIATSYPNLLRRYMQEQGINYRDCMLKGSVEVAPRAGLSDGICDLVSTGATLEANGLYETEVIYRSMACIIQSTQSQPDDKQALINKILSRINGVVRAKESKYILLHAPTETLEQIVALLPGAENPTVLPLNDDTNRVAIHAVSTEDLFWDTMEQLTQLGASSILVMPIEKMMG.

This sequence belongs to the ATP phosphoribosyltransferase family. Long subfamily. The cofactor is Mg(2+).

The protein localises to the cytoplasm. The catalysed reaction is 1-(5-phospho-beta-D-ribosyl)-ATP + diphosphate = 5-phospho-alpha-D-ribose 1-diphosphate + ATP. The protein operates within amino-acid biosynthesis; L-histidine biosynthesis; L-histidine from 5-phospho-alpha-D-ribose 1-diphosphate: step 1/9. Its activity is regulated as follows. Feedback inhibited by histidine. Its function is as follows. Catalyzes the condensation of ATP and 5-phosphoribose 1-diphosphate to form N'-(5'-phosphoribosyl)-ATP (PR-ATP). Has a crucial role in the pathway because the rate of histidine biosynthesis seems to be controlled primarily by regulation of HisG enzymatic activity. This Shewanella pealeana (strain ATCC 700345 / ANG-SQ1) protein is ATP phosphoribosyltransferase.